A 384-amino-acid polypeptide reads, in one-letter code: Carbamoyl phosphate synthase small chain (384 aa).

Residues 1-192 (MIKKIPAILV…LADRNREKIY (192 aa)) form a CPSase region. L-glutamine contacts are provided by S51, G244, and G246. The Glutamine amidotransferase type-1 domain maps to 196 to 382 (KVIVIDFGVK…IEIMKQFRKE (187 aa)). The Nucleophile role is filled by C272. M273, Q276, N312, G314, and F315 together coordinate L-glutamine. Active-site residues include H355 and E357.

This sequence belongs to the CarA family. Composed of two chains; the small (or glutamine) chain promotes the hydrolysis of glutamine to ammonia, which is used by the large (or ammonia) chain to synthesize carbamoyl phosphate. Tetramer of heterodimers (alpha,beta)4.

It is found in the plastid. Its subcellular location is the chloroplast. It catalyses the reaction hydrogencarbonate + L-glutamine + 2 ATP + H2O = carbamoyl phosphate + L-glutamate + 2 ADP + phosphate + 2 H(+). It carries out the reaction L-glutamine + H2O = L-glutamate + NH4(+). Its pathway is amino-acid biosynthesis; L-arginine biosynthesis; carbamoyl phosphate from bicarbonate: step 1/1. It participates in pyrimidine metabolism; UMP biosynthesis via de novo pathway; (S)-dihydroorotate from bicarbonate: step 1/3. Its function is as follows. Small subunit of the glutamine-dependent carbamoyl phosphate synthetase (CPSase). CPSase catalyzes the formation of carbamoyl phosphate from the ammonia moiety of glutamine, carbonate, and phosphate donated by ATP, constituting the first step of 2 biosynthetic pathways, one leading to arginine and/or urea and the other to pyrimidine nucleotides. The small subunit (glutamine amidotransferase) binds and cleaves glutamine to supply the large subunit with the substrate ammonia. This Porphyra purpurea (Red seaweed) protein is Carbamoyl phosphate synthase small chain.